Here is a 74-residue protein sequence, read N- to C-terminus: Ubiquitin-like protein FUBI (74 aa).

This sequence belongs to the ubiquitin family.

This chain is Ubiquitin-like protein FUBI (Fau), found in Rattus norvegicus (Rat).